The sequence spans 245 residues: Putative binding protein HI_1525 (245 aa).

The signal sequence occupies residues 1–19; the sequence is MKKLVAVTSMILTTFSVQA. 2 residues coordinate molybdate: Ser56 and Val163.

The protein belongs to the bacterial solute-binding protein ModA family.

It localises to the periplasm. Its function is as follows. Probably involved in the binding-dependent system. The polypeptide is Putative binding protein HI_1525 (Haemophilus influenzae (strain ATCC 51907 / DSM 11121 / KW20 / Rd)).